Consider the following 99-residue polypeptide: Large ribosomal subunit protein bL21 (99 aa).

This sequence belongs to the bacterial ribosomal protein bL21 family. As to quaternary structure, part of the 50S ribosomal subunit. Contacts protein L20.

This protein binds to 23S rRNA in the presence of protein L20. In Mesomycoplasma hyopneumoniae (strain 7448) (Mycoplasma hyopneumoniae), this protein is Large ribosomal subunit protein bL21.